Reading from the N-terminus, the 235-residue chain is uncharacterized protein (235 aa).

Residues 2 to 69 (CRLAKIISNA…KPRLWIYYKP (68 aa)) enclose the S4 RNA-binding domain. Aspartate 102 acts as the Nucleophile in catalysis.

Belongs to the pseudouridine synthase RsuA family.

The enzyme catalyses a uridine in RNA = a pseudouridine in RNA. This is an uncharacterized protein from Rickettsia prowazekii (strain Madrid E).